Reading from the N-terminus, the 320-residue chain is MPDPMRSYLDFEKPVAELDSKVDELRAMAAAGTDIGEEVSRIEEKAGQALADLYANLTPWQKTMVARHPQRPHFTDFVNGLITEFTPLAGDRKFGEDAALLGGFGRFRGEPICVMGQEKGATTESRLKHNFGMARPEGYRKAVRLMEMAERFGIPVLSLVDSAGAYPGIGAEERGQAEAIARSTDACLSLGVPNVAIITGEGMSGGAIALTTANRVLMLEHAIYSVISPEAASSILWRDGTKAQEAANSMKITAQDMLRFGVVDTILKEPVGGAHRDPAAMIAATGEAIAQAFDELKGLDADAIRKQRRQKFIDIGRKLS.

Residues 41–295 (RIEEKAGQAL…GEAIAQAFDE (255 aa)) enclose the CoA carboxyltransferase C-terminal domain.

The protein belongs to the AccA family. Acetyl-CoA carboxylase is a heterohexamer composed of biotin carboxyl carrier protein (AccB), biotin carboxylase (AccC) and two subunits each of ACCase subunit alpha (AccA) and ACCase subunit beta (AccD).

Its subcellular location is the cytoplasm. It catalyses the reaction N(6)-carboxybiotinyl-L-lysyl-[protein] + acetyl-CoA = N(6)-biotinyl-L-lysyl-[protein] + malonyl-CoA. The protein operates within lipid metabolism; malonyl-CoA biosynthesis; malonyl-CoA from acetyl-CoA: step 1/1. Functionally, component of the acetyl coenzyme A carboxylase (ACC) complex. First, biotin carboxylase catalyzes the carboxylation of biotin on its carrier protein (BCCP) and then the CO(2) group is transferred by the carboxyltransferase to acetyl-CoA to form malonyl-CoA. The polypeptide is Acetyl-coenzyme A carboxylase carboxyl transferase subunit alpha (Bradyrhizobium sp. (strain BTAi1 / ATCC BAA-1182)).